Consider the following 173-residue polypeptide: 2-C-methyl-D-erythritol 2,4-cyclodiphosphate synthase (173 aa).

Residues aspartate 17 and histidine 19 each contribute to the a divalent metal cation site. 4-CDP-2-C-methyl-D-erythritol 2-phosphate-binding positions include 17–19 and 49–50; these read DVH and HS. A divalent metal cation is bound at residue histidine 57. 4-CDP-2-C-methyl-D-erythritol 2-phosphate is bound by residues 76 to 80, 147 to 150, phenylalanine 154, and arginine 157; these read FPNTD and TTTE.

This sequence belongs to the IspF family. Homotrimer. A divalent metal cation serves as cofactor.

It carries out the reaction 4-CDP-2-C-methyl-D-erythritol 2-phosphate = 2-C-methyl-D-erythritol 2,4-cyclic diphosphate + CMP. The protein operates within isoprenoid biosynthesis; isopentenyl diphosphate biosynthesis via DXP pathway; isopentenyl diphosphate from 1-deoxy-D-xylulose 5-phosphate: step 4/6. Involved in the biosynthesis of isopentenyl diphosphate (IPP) and dimethylallyl diphosphate (DMAPP), two major building blocks of isoprenoid compounds. Catalyzes the conversion of 4-diphosphocytidyl-2-C-methyl-D-erythritol 2-phosphate (CDP-ME2P) to 2-C-methyl-D-erythritol 2,4-cyclodiphosphate (ME-CPP) with a corresponding release of cytidine 5-monophosphate (CMP). This is 2-C-methyl-D-erythritol 2,4-cyclodiphosphate synthase from Ehrlichia chaffeensis (strain ATCC CRL-10679 / Arkansas).